The chain runs to 469 residues: MNRLFRALPSVDALLTALTTPTHGHDTFADLPRALLRDLVNDFLDARREDIRQGRIDAPESLAAERLLPSLVQSVGRRSRAHFRRVLNGTGVVIHTNLGRSLLAPAATEAVAAACAHYSNLEFDLDTGERGSRYSHVEQLLCRVTGAEAGLVVNNNAAAVLLVLDTLCKGGEVVVSRGQLVEIGGSFRIPDVMEKSGATLREVGATNRTHLRDYENAINEKTVALLRVHTSNYRVVGFHKEVPLDELVALGRARDLPVIEDLGSGSFLDFTPWGLPGEPTVQSVVGAGPDVITFSGDKVLGGPQAGLIVGRRQWIDRIKRNPLNRALRIDKMTLAALEATLRLYLDPERARNEVPTLRMMTASPDELARRARRLAARLRKALGDAARVGTVPGVSRVGGGSFPERDLPTTLVEVAPASCTATVLKTRLLDTDPPLVGRLENDTFRLDPRTLDDVEFAPVATALRQALGL.

An N6-(pyridoxal phosphate)lysine modification is found at Lys298.

It belongs to the SelA family. Pyridoxal 5'-phosphate serves as cofactor.

The protein resides in the cytoplasm. The catalysed reaction is L-seryl-tRNA(Sec) + selenophosphate + H(+) = L-selenocysteinyl-tRNA(Sec) + phosphate. Its pathway is aminoacyl-tRNA biosynthesis; selenocysteinyl-tRNA(Sec) biosynthesis; selenocysteinyl-tRNA(Sec) from L-seryl-tRNA(Sec) (bacterial route): step 1/1. In terms of biological role, converts seryl-tRNA(Sec) to selenocysteinyl-tRNA(Sec) required for selenoprotein biosynthesis. This is L-seryl-tRNA(Sec) selenium transferase from Nitratidesulfovibrio vulgaris (strain ATCC 29579 / DSM 644 / CCUG 34227 / NCIMB 8303 / VKM B-1760 / Hildenborough) (Desulfovibrio vulgaris).